Consider the following 677-residue polypeptide: DNA polymerase epsilon subunit B (677 aa).

The protein belongs to the DNA polymerase epsilon subunit B family. As to quaternary structure, heterotetramer. Consists of four subunits: POL2, DPB2, DPB3 and DPB4.

The protein localises to the nucleus. As accessory component of the DNA polymerase epsilon (DNA polymerase II) participates in chromosomal DNA replication. The protein is DNA polymerase epsilon subunit B (DPB2) of Eremothecium gossypii (strain ATCC 10895 / CBS 109.51 / FGSC 9923 / NRRL Y-1056) (Yeast).